The chain runs to 275 residues: Large ribosomal subunit protein uL2 (275 aa).

The disordered stretch occupies residues 223 to 275; sequence GVVMNPVDHPHGGGEGRGKGHHPQSPWGVPAKGYKTRRGKRASDKFIVRRRNG. The segment covering 230-240 has biased composition (basic and acidic residues); it reads DHPHGGGEGRG.

It belongs to the universal ribosomal protein uL2 family. In terms of assembly, part of the 50S ribosomal subunit. Forms a bridge to the 30S subunit in the 70S ribosome.

In terms of biological role, one of the primary rRNA binding proteins. Required for association of the 30S and 50S subunits to form the 70S ribosome, for tRNA binding and peptide bond formation. It has been suggested to have peptidyltransferase activity; this is somewhat controversial. Makes several contacts with the 16S rRNA in the 70S ribosome. This chain is Large ribosomal subunit protein uL2, found in Fervidobacterium nodosum (strain ATCC 35602 / DSM 5306 / Rt17-B1).